Here is a 322-residue protein sequence, read N- to C-terminus: Anthranilate phosphoribosyltransferase (322 aa).

5-phospho-alpha-D-ribose 1-diphosphate is bound by residues glycine 71, glycine 74–aspartate 75, threonine 79, asparagine 81–threonine 84, lysine 99–glycine 107, and alanine 111. Residue glycine 71 coordinates anthranilate. Serine 83 lines the Mg(2+) pocket. Asparagine 102 lines the anthranilate pocket. Arginine 157 is an anthranilate binding site. The Mg(2+) site is built by aspartate 215 and glutamate 216.

Belongs to the anthranilate phosphoribosyltransferase family. Homodimer. Mg(2+) is required as a cofactor.

It catalyses the reaction N-(5-phospho-beta-D-ribosyl)anthranilate + diphosphate = 5-phospho-alpha-D-ribose 1-diphosphate + anthranilate. The protein operates within amino-acid biosynthesis; L-tryptophan biosynthesis; L-tryptophan from chorismate: step 2/5. Functionally, catalyzes the transfer of the phosphoribosyl group of 5-phosphorylribose-1-pyrophosphate (PRPP) to anthranilate to yield N-(5'-phosphoribosyl)-anthranilate (PRA). The sequence is that of Anthranilate phosphoribosyltransferase from Thermoplasma acidophilum (strain ATCC 25905 / DSM 1728 / JCM 9062 / NBRC 15155 / AMRC-C165).